The chain runs to 715 residues: Targeting protein for Xklp2-B (715 aa).

The tract at residues 36–167 (NAENIPPDQK…LTMPATPTVL (132 aa)) is disordered. Polar residues predominate over residues 47 to 56 (LSETSVNAEQ). A compositionally biased stretch (basic residues) spans 85–103 (QTKRSARRMSKKHRQKILL). Basic and acidic residues predominate over residues 104 to 115 (KMKETHLEKETA). The segment covering 141–152 (QPTSSHHGTTSP) has biased composition (polar residues). Residue Ser204 is modified to Phosphoserine; by plk1. 2 disordered regions span residues 260 to 291 (PPTS…EEAS) and 314 to 337 (RSRQ…TNPK).

The protein belongs to the TPX2 family. As to quaternary structure, associates with microtubules. Interacts with aurka and plk1. Interacts with kif15. Post-translationally, phosphorylated during mitosis. Hyperphosphorylated upon assembly of microtubules.

It is found in the nucleus. The protein resides in the cytoplasm. It localises to the cytoskeleton. Its subcellular location is the spindle. The protein localises to the spindle pole. Functionally, spindle assembly factor. Required for normal assembly of mitotic spindles. Mediates the binding kif15 and aurka to spindle microtubules. Required for targeting kif15 to microtubule minus ends. Activates aurka by promoting its autophosphorylation and protects the phosphorylated residue against dephosphorylation. This is Targeting protein for Xklp2-B (tpx2-b) from Xenopus laevis (African clawed frog).